We begin with the raw amino-acid sequence, 722 residues long: Ras and EF-hand domain-containing protein (722 aa).

2 consecutive EF-hand domains span residues 5-39 (DELS…ELKV) and 39-74 (VSPS…ARGL). Positions 75-84 (HMPEGKKDVE) are enriched in basic and acidic residues. Residues 75-109 (HMPEGKKDVEQGEPPKSPSTPDKEEKPEETSSPAW) form a disordered region. Residues 156 to 335 (REIRLQSTEM…ANRKLHDSND (180 aa)) adopt a coiled-coil conformation. Residues 355–374 (INTSPGSTISRNSPKLTRCT) are compositionally biased toward polar residues. 2 disordered regions span residues 355–384 (INTS…PRSS) and 439–491 (FHRS…SGAS). A compositionally biased stretch (low complexity) spans 480 to 491 (SNPVSRSSSGAS). GTP-binding positions include 532–537 (AVGKSS), 635–638 (NKAD), and 672–673 (AK).

The protein belongs to the small GTPase superfamily. Rab family. As to quaternary structure, homodimer.

The protein localises to the cytoplasm. It localises to the perinuclear region. Binds predominantly GDP, and also GTP. The chain is Ras and EF-hand domain-containing protein (rasef) from Xenopus tropicalis (Western clawed frog).